The primary structure comprises 409 residues: Autotransproter heptosyltransferase BAHTCr (409 aa).

Residues T107, L108, and G109 each contribute to the ADP-D-glycero-beta-D-manno-heptose site. D110 acts as the Proton acceptor in catalysis. ADP-D-glycero-beta-D-manno-heptose is bound by residues Q224, T226, K230, R257, G302, and E326. C339, C342, C358, and C370 together coordinate Fe(3+).

The protein belongs to the glycosyltransferase 9 family. As to quaternary structure, homododecamer composed of 6 homodimers forming a ring. Fe(3+) serves as cofactor.

The protein resides in the cytoplasm. The enzyme catalyses ADP-D-glycero-beta-D-manno-heptose + L-seryl-[protein] = O-(D-glycero-alpha-D-manno-heptosyl)-L-seryl-[protein] + ADP + H(+). It carries out the reaction ADP-L-glycero-beta-D-manno-heptose + L-seryl-[protein] = O-(L-glycero-alpha-D-manno-heptosyl)-L-seryl-[protein] + ADP + H(+). Functionally, glycosylates autotransporter CARC. By glycosylating CARC, involved in the colonization of the mouse host gastrointestinal tract. The sequence is that of Autotransproter heptosyltransferase BAHTCr from Citrobacter rodentium (strain ICC168) (Citrobacter freundii biotype 4280).